Consider the following 445-residue polypeptide: Acyl-CoA Delta-4 desaturase (445 aa).

The 78-residue stretch at 19–96 folds into the Cytochrome b5 heme-binding domain; that stretch reads AGVYTWEEVQ…MKPLLVGELA (78 aa). 4 helical membrane-spanning segments follow: residues 132 to 152, 153 to 173, 266 to 286, and 307 to 327; these read LFFL…LLMV, WHWG…ATAQ, YFFL…NIMM, and YMLC…MMFA.

This sequence belongs to the fatty acid desaturase type 1 family.

It is found in the membrane. The enzyme catalyses (8Z,11Z,14Z,17Z)-eicosatetraenoyl-CoA + 2 Fe(II)-[cytochrome b5] + O2 + 2 H(+) = (5Z,8Z,11Z,14Z,17Z)-eicosapentaenoyl-CoA + 2 Fe(III)-[cytochrome b5] + 2 H2O. It catalyses the reaction (7Z,10Z,13Z,16Z)-docosatetraenoyl-CoA + 2 Fe(II)-[cytochrome b5] + O2 + 2 H(+) = (4Z,7Z,10Z,13Z,16Z)-docosapentaenoyl-CoA + 2 Fe(III)-[cytochrome b5] + 2 H2O. It carries out the reaction (7Z,10Z,13Z,16Z,19Z)-docosapentaenoyl-CoA + 2 Fe(II)-[cytochrome b5] + O2 + 2 H(+) = (4Z,7Z,10Z,13Z,16Z,19Z)-docosahexaenoyl-CoA + 2 Fe(III)-[cytochrome b5] + 2 H2O. The protein operates within lipid metabolism; polyunsaturated fatty acid biosynthesis. Its function is as follows. Fatty acid desaturase with bifunctional delta-4 and delta-5 activities. Component of a lipid metabolic pathway that catalyzes the biosynthesis of polyunsaturated fatty acids (PUFA) with preference toward n-3 substrates and Delta(4)function. The polypeptide is Acyl-CoA Delta-4 desaturase (Siganus canaliculatus (White-spotted spinefoot)).